The following is a 1116-amino-acid chain: ELKS/Rab6-interacting/CAST family member 1 (1116 aa).

The interval 1–54 is disordered; that stretch reads MYGSARSVGKVEPSSQSPGRSPRLPRSPRLGHRRTNSTGGSSGSSVGGGSGKTL. An N6-acetyllysine modification is found at K10. The segment covering 13–28 has biased composition (low complexity); the sequence is PSSQSPGRSPRLPRSP. Residues S17, S21, and S37 each carry the phosphoserine modification. The residue at position 38 (T38) is a Phosphothreonine. Positions 40-51 are enriched in gly residues; sequence GSSGSSVGGGSG. Phosphoserine is present on residues S55, S75, and S94. A coiled-coil region spans residues 144–988; sequence RQARDNTIMD…RMKLMADNYE (845 aa). The segment covering 590-602 has biased composition (basic and acidic residues); it reads KEKQMSSLKERVK. Disordered regions lie at residues 590-609 and 814-836; these read KEKQMSSLKERVKSLQADTT and ARRREDNLNDSSQQLQDSLRKKD. S1005 bears the Phosphoserine mark. T1046 carries the post-translational modification Phosphothreonine. Residues 1046–1108 form the FIP-RBD domain; the sequence is TPPASYNLDD…DHCPDILEQV (63 aa). A coiled-coil region spans residues 1060-1100; the sequence is WENELQKMTRGQLQDELEKGERDNAELQEFANAILQQIADH.

As to quaternary structure, part of a complex with CHUK, IKBKB and IKBKG. Interacts with CHUK, IKBKB and IKBKG. The interaction with IKBKG is independent of CHUK and IKBKB. Interacts with NFKBIA. Isoform 4 interacts with PPFIA1, and through its C-terminus with the PDZ domains of RIMS1 and RIMS2. Interacts with ERC2/CAST1. Interacts with the GTB-bound forms of RAB6A isoform 1 and isoform 2 and with RAB6B. The interaction was strongest with RAB6B, followed by RAB6A isoform 2 and weakest with RAB6A isoform 1. Interacts with SDCCAG8. Part of a cortical microtubule stabilization complex (CMSC) composed of KANK1, PPFIA1, PPFIBP1, ERC1/ELKS, PHLDB2/LL5beta, CLASPs, KIF21A and possibly additional interactors; within CMSCs KANK1 and PHLDB2/LL5beta appear to be the core components for targeting of microtubule-binding proteins KIF21A and CLASPs, whereas PPFIA1, PPFIBP1 and ERC1/ELKS serve as scaffolds for protein clustering. In terms of tissue distribution, widely expressed. Isoform 2 and isoform 4 are abundantly expressed in brain. Isoform 1 and isoform 3 are predominantly expressed in testis and thyroid, and isoform 1 predominates in other tissues tested.

Its subcellular location is the cytoplasm. The protein localises to the cytoskeleton. It is found in the microtubule organizing center. It localises to the centrosome. The protein resides in the membrane. Its subcellular location is the golgi apparatus membrane. The protein localises to the presynaptic cell membrane. It is found in the cell projection. It localises to the podosome. Functionally, regulatory subunit of the IKK complex. Probably recruits IkappaBalpha/NFKBIA to the complex. May be involved in the organization of the cytomatrix at the nerve terminals active zone (CAZ) which regulates neurotransmitter release. May be involved in vesicle trafficking at the CAZ. May be involved in Rab-6 regulated endosomes to Golgi transport. The chain is ELKS/Rab6-interacting/CAST family member 1 (ERC1) from Homo sapiens (Human).